The following is a 281-amino-acid chain: Oxidoreductase-like protein SRL4 (281 aa).

The NADP(+) site is built by Leu-39, Thr-60, Lys-67, Lys-152, and Lys-197. The active-site Lowers pKa of active site Tyr is the Lys-197.

This sequence belongs to the short-chain dehydrogenases/reductases (SDR) family.

May be involved in the regulation of dNTP production. Induces the SOS system when expressed in E.coli, therefore, it may play a role in DNA metabolism and/or in genome stability. This chain is Oxidoreductase-like protein SRL4 (SRL4), found in Saccharomyces cerevisiae (strain ATCC 204508 / S288c) (Baker's yeast).